Consider the following 319-residue polypeptide: MTAVARSSLRSTLEPKSFGRVAVLFGGKSAEREVSLNSGNAVLKALLDAGVDAFGIDVGDDFLQRLVSEKIDRAFIVLHGRGGEDGTMQGLLECLEIPYTGSGVLASALAMDKLRTKQVWQSLGPATPLHAVLENENDCICAATELGFPLIVKPAHEGSSIGMAKVNSVDELIAAWKAASTYDSQVLVEQWIQGPEFTVASLRGQVLPPIGLGTPHSFYDYDAKYLASDTQYRIPCGLDDAQEQQLKQLAARACDAIGIAGWARTDVMQDAEGKFWLLEVNTVPGMTDHSLVPMAARAAGLNFQQLVLAILADSVQARG.

The ATP-grasp domain occupies 117 to 312 (KQVWQSLGPA…FQQLVLAILA (196 aa)). An ATP-binding site is contributed by 143–198 (ATELGFPLIVKPAHEGSSIGMAKVNSVDELIAAWKAASTYDSQVLVEQWIQGPEFT). Mg(2+) is bound by residues aspartate 266, glutamate 279, and asparagine 281.

This sequence belongs to the D-alanine--D-alanine ligase family. Requires Mg(2+) as cofactor. Mn(2+) serves as cofactor.

It is found in the cytoplasm. It carries out the reaction 2 D-alanine + ATP = D-alanyl-D-alanine + ADP + phosphate + H(+). The protein operates within cell wall biogenesis; peptidoglycan biosynthesis. Functionally, cell wall formation. The polypeptide is D-alanine--D-alanine ligase B (Pseudomonas syringae pv. tomato (strain ATCC BAA-871 / DC3000)).